Consider the following 557-residue polypeptide: Aspartate--tRNA ligase, cytoplasmic (557 aa).

A compositionally biased stretch (basic and acidic residues) spans 1-12; the sequence is MSQDENIVKAVE. Positions 1–74 are disordered; it reads MSQDENIVKA…AAAEDTAKDN (74 aa). S2 is subject to N-acetylserine. S14 is subject to Phosphoserine. Basic and acidic residues predominate over residues 37 to 74; the sequence is LQKEQEKQRKKEERALQLEAEREAREKKAAAEDTAKDN. E281 is a binding site for L-aspartate. Phosphoserine is present on S301. Positions 303-306 are aspartate; the sequence is QFNK. R325 is an L-aspartate binding site. ATP contacts are provided by residues 325–327, 333–335, and E478; these read RAE and RHM. The L-aspartate site is built by S481 and R485. S502 carries the post-translational modification Phosphoserine. 528 to 531 provides a ligand contact to ATP; the sequence is GLER. S546 is subject to Phosphoserine.

This sequence belongs to the class-II aminoacyl-tRNA synthetase family. Type 2 subfamily. In terms of assembly, homodimer.

The protein localises to the cytoplasm. The catalysed reaction is tRNA(Asp) + L-aspartate + ATP = L-aspartyl-tRNA(Asp) + AMP + diphosphate. This chain is Aspartate--tRNA ligase, cytoplasmic (DPS1), found in Saccharomyces cerevisiae (strain ATCC 204508 / S288c) (Baker's yeast).